Reading from the N-terminus, the 709-residue chain is NAD(P)H-quinone oxidoreductase subunit 5, chloroplastic (709 aa).

Transmembrane regions (helical) follow at residues 9-29 (WIIP…LLLF), 40-60 (WAFP…DLSI), 89-109 (IDSL…FVLI), 125-145 (FAYM…SNLI), 147-167 (IYXF…FWFT), 219-239 (NEVH…GAVA), 257-277 (PTPI…IFLV), 280-300 (LLPL…IGII), 327-347 (LGYM…FHLI), 354-374 (ALLF…VGYS), 396-416 (IAFL…CFWS), 425-445 (WLYS…TASY), 540-560 (LFPM…AIPF), and 594-614 (FLTN…TAFL).

It belongs to the complex I subunit 5 family. NDH is composed of at least 16 different subunits, 5 of which are encoded in the nucleus.

It is found in the plastid. The protein localises to the chloroplast thylakoid membrane. It catalyses the reaction a plastoquinone + NADH + (n+1) H(+)(in) = a plastoquinol + NAD(+) + n H(+)(out). The catalysed reaction is a plastoquinone + NADPH + (n+1) H(+)(in) = a plastoquinol + NADP(+) + n H(+)(out). Its function is as follows. NDH shuttles electrons from NAD(P)H:plastoquinone, via FMN and iron-sulfur (Fe-S) centers, to quinones in the photosynthetic chain and possibly in a chloroplast respiratory chain. The immediate electron acceptor for the enzyme in this species is believed to be plastoquinone. Couples the redox reaction to proton translocation, and thus conserves the redox energy in a proton gradient. This Pachira aquatica (Guiana chestnut) protein is NAD(P)H-quinone oxidoreductase subunit 5, chloroplastic (ndhF).